A 166-amino-acid polypeptide reads, in one-letter code: NAD(P)H-quinone oxidoreductase subunit I, chloroplastic (166 aa).

2 4Fe-4S ferredoxin-type domains span residues 55 to 84 (GRIH…VDWK) and 95 to 124 (LNYS…MTEE). [4Fe-4S] cluster is bound by residues Cys64, Cys67, Cys70, Cys74, Cys104, Cys107, Cys110, and Cys114.

Belongs to the complex I 23 kDa subunit family. NDH is composed of at least 16 different subunits, 5 of which are encoded in the nucleus. [4Fe-4S] cluster serves as cofactor.

It is found in the plastid. The protein resides in the chloroplast thylakoid membrane. It catalyses the reaction a plastoquinone + NADH + (n+1) H(+)(in) = a plastoquinol + NAD(+) + n H(+)(out). It carries out the reaction a plastoquinone + NADPH + (n+1) H(+)(in) = a plastoquinol + NADP(+) + n H(+)(out). In terms of biological role, NDH shuttles electrons from NAD(P)H:plastoquinone, via FMN and iron-sulfur (Fe-S) centers, to quinones in the photosynthetic chain and possibly in a chloroplast respiratory chain. The immediate electron acceptor for the enzyme in this species is believed to be plastoquinone. Couples the redox reaction to proton translocation, and thus conserves the redox energy in a proton gradient. This Pentanema britannica (British yellowhead) protein is NAD(P)H-quinone oxidoreductase subunit I, chloroplastic.